The following is a 232-amino-acid chain: Ribosomal RNA small subunit methyltransferase G (232 aa).

S-adenosyl-L-methionine contacts are provided by residues glycine 93, leucine 98, 144-145 (VE), and arginine 163.

This sequence belongs to the methyltransferase superfamily. RNA methyltransferase RsmG family.

Its subcellular location is the cytoplasm. It carries out the reaction guanosine(527) in 16S rRNA + S-adenosyl-L-methionine = N(7)-methylguanosine(527) in 16S rRNA + S-adenosyl-L-homocysteine. Functionally, specifically methylates the N7 position of guanine in position 527 of 16S rRNA. The chain is Ribosomal RNA small subunit methyltransferase G from Burkholderia pseudomallei (strain 1106a).